The sequence spans 262 residues: MLLYIFFLMYTTRSRDMSTLQSNMFKFYNAPHSGMYPTFWVGHLKTMIKICVKRSDVINFNKPLDKEMLEMMYGSLLGDASAEKRKGGKGTRMLFYQEGSHNEYLLFLHRLIANLGYCNTNIPKLQTRISNNGKIRKIIKFSTWTYDQFNEMHKNWYINGKKVLPNDIDQFLSPLALAIWIMDDGGKMGKGLKLATNNFTLNEVKQLMAMLDVKYNIKSTMHKTGAMDQYNMYMLSDSMPILVKKIKPYIVPSMKYKLGNYM.

Belongs to the LAGLIDADG endonuclease family.

It is found in the mitochondrion. In terms of biological role, this protein is responsible for splicing and maturation of cytochrome b mRNA. Specifically, it may be responsible for the splicing specificity of the second intron. The polypeptide is Cytochrome b mRNA maturase bI2 (bI2) (Debaryomyces hansenii (strain ATCC 36239 / CBS 767 / BCRC 21394 / JCM 1990 / NBRC 0083 / IGC 2968) (Yeast)).